Consider the following 461-residue polypeptide: Nuclear distribution protein PAC1 (461 aa).

A coiled-coil region spans residues 64–93; that stretch reads NSIIRLHRKILDLEQKCQQLTEELEAVPTE. WD repeat units follow at residues 118 to 157, 161 to 203, 209 to 252, 254 to 292, 318 to 362, 382 to 421, and 423 to 461; these read DVGA…MPLH, AHMK…AFQL, SHEH…KSFQ, HNQW…SMAV, DDQV…FIPH, GHTS…KVWP, and ASHG…VFMR.

The protein belongs to the WD repeat LIS1/nudF family. Self-associates. Interacts with NDL1 and dynein.

It localises to the cytoplasm. The protein localises to the cytoskeleton. The protein resides in the spindle pole. In terms of biological role, positively regulates the activity of the minus-end directed microtubule motor protein dynein. Plays a central role in positioning the mitotic spindle at the bud neck during cell division. Targets cytoplasmic dynein to microtubule plus ends, thereby promoting dynein-mediated microtubule sliding along the bud cortex and consequently the movement of the mitotic spindle to the bud neck. In Eremothecium gossypii (strain ATCC 10895 / CBS 109.51 / FGSC 9923 / NRRL Y-1056) (Yeast), this protein is Nuclear distribution protein PAC1.